The primary structure comprises 55 residues: Large ribosomal subunit protein bL32 (55 aa).

A compositionally biased stretch (basic residues) spans Met-1–Lys-23. A disordered region spans residues Met-1–Ile-26.

It belongs to the bacterial ribosomal protein bL32 family.

This is Large ribosomal subunit protein bL32 from Picosynechococcus sp. (strain ATCC 27264 / PCC 7002 / PR-6) (Agmenellum quadruplicatum).